The sequence spans 394 residues: DNA replication and repair protein RecF (394 aa).

Residue 30 to 37 coordinates ATP; it reads GPNAAGKT.

This sequence belongs to the RecF family.

It localises to the cytoplasm. In terms of biological role, the RecF protein is involved in DNA metabolism; it is required for DNA replication and normal SOS inducibility. RecF binds preferentially to single-stranded, linear DNA. It also seems to bind ATP. The chain is DNA replication and repair protein RecF from Roseiflexus castenholzii (strain DSM 13941 / HLO8).